The sequence spans 130 residues: MLKTLPPTLREKKRYVALEIIFEDELFQKDVIAIVRNALMNYSGVLGCSKANPWLIDYNHPYGILRISRDEVDNLRSSLSLSNEHRKKPINIHIIGISNSVKHIREKFLHVPHEPYYKVIQKLKKKGPKR.

It belongs to the eukaryotic/archaeal RNase P protein component 2 family. As to quaternary structure, consists of a catalytic RNA component and at least 4-5 protein subunits.

It is found in the cytoplasm. The catalysed reaction is Endonucleolytic cleavage of RNA, removing 5'-extranucleotides from tRNA precursor.. Its function is as follows. Part of ribonuclease P, a protein complex that generates mature tRNA molecules by cleaving their 5'-ends. This chain is Ribonuclease P protein component 2, found in Methanococcus maripaludis (strain C7 / ATCC BAA-1331).